A 106-amino-acid polypeptide reads, in one-letter code: Putative membrane protein insertion efficiency factor (106 aa).

It belongs to the UPF0161 family.

It is found in the cell inner membrane. In terms of biological role, could be involved in insertion of integral membrane proteins into the membrane. In Acinetobacter baylyi (strain ATCC 33305 / BD413 / ADP1), this protein is Putative membrane protein insertion efficiency factor.